A 1006-amino-acid chain; its full sequence is Phosphatidylinositol 4,5-bisphosphate 5-phosphatase A (1006 aa).

Positions 1–416 are disordered; that stretch reads MEGQSSRGSR…SSSPWSAQPT (416 aa). A compositionally biased stretch (polar residues) spans 27–41; that stretch reads VAQTGAPSKVDSSFQ. Asymmetric dimethylarginine; alternate is present on R56. Residue R56 is modified to Omega-N-methylarginine; alternate. An Omega-N-methylarginine modification is found at R65. The residue at position 76 (R76) is an Asymmetric dimethylarginine. R83 is subject to Asymmetric dimethylarginine; alternate. At R83 the chain carries Omega-N-methylarginine; alternate. Residues 94-112 are compositionally biased toward polar residues; sequence GQKTATAHRSSSLAPTSVG. An RSXSXX motif 1 motif is present at residues 102–107; the sequence is RSSSLA. Low complexity predominate over residues 180–193; that stretch reads LAASGLSLALASEE. The span at 196-209 shows a compositional bias: pro residues; the sequence is PELPSTPSPVPSPV. A compositionally biased stretch (low complexity) spans 210–234; the sequence is LSPTQEQALAPASTASGAASVGQTS. Positions 256-273 are enriched in polar residues; sequence PAQTSGPTGSPPCIQTSP. S291 and S324 each carry phosphoserine. The span at 337-347 shows a compositional bias: pro residues; it reads VPPPLPKPPRS. The SH3-binding signature appears at 345 to 350; the sequence is PRSPSR. Low complexity-rich tracts occupy residues 348–360 and 398–409; these read PSRSPSHSPNRSP and TTSSSTSTLSSS. An RSXSXX motif 2 motif is present at residues 350–355; the sequence is RSPSHS. Residues 425 to 728 are catalytic; sequence ITVVTWNVGT…SDHKPVAAQF (304 aa). Positions 729–840 are required for ruffle localization; the sequence is LLQFAFRDDM…IGITEPFQIS (112 aa). A compositionally biased stretch (low complexity) spans 844–858; sequence SELASSSTDSSGTSS. The interval 844–1006 is disordered; that stretch reads SELASSSTDS…RGLEEGGLGP (163 aa). 2 short sequence motifs (RSXSXX motif) span residues 874–879 and 885–890; these read RSPSPG and RSRSPG. The residue at position 903 (S903) is a Phosphoserine. The RSXSXX motif 5 signature appears at 911–916; sequence RSPSPQ. Positions 927–946 are enriched in low complexity; that stretch reads RSSNGSSRGSSEEGPSGLPG. Phosphoserine is present on S990.

This sequence belongs to the inositol 1,4,5-trisphosphate 5-phosphatase type II family.

It is found in the cytoplasm. The catalysed reaction is 1D-myo-inositol 1,4,5-trisphosphate + H2O = 1D-myo-inositol 1,4-bisphosphate + phosphate. The enzyme catalyses 1D-myo-inositol 1,3,4,5-tetrakisphosphate + H2O = 1D-myo-inositol 1,3,4-trisphosphate + phosphate. It catalyses the reaction a 1,2-diacyl-sn-glycero-3-phospho-(1D-myo-inositol-4,5-bisphosphate) + H2O = a 1,2-diacyl-sn-glycero-3-phospho-(1D-myo-inositol 4-phosphate) + phosphate. Inositol 5-phosphatase, which converts inositol 1,4,5-trisphosphate to inositol 1,4-bisphosphate. Also converts phosphatidylinositol 4,5-bisphosphate to phosphatidylinositol 4-phosphate and inositol 1,3,4,5-tetrakisphosphate to inositol 1,3,4-trisphosphate in vitro. May be involved in modulation of the function of inositol and phosphatidylinositol polyphosphate-binding proteins that are present at membranes ruffles. In Homo sapiens (Human), this protein is Phosphatidylinositol 4,5-bisphosphate 5-phosphatase A (INPP5J).